Reading from the N-terminus, the 39-residue chain is Natriuretic peptide PaNP-d (39 aa).

Positions 1-8 (SGSKTAEI) are excised as a propeptide. A disordered region spans residues 1–39 (SGSKTAEIDDGCFGLPLDPIGSTSGMGCRSVPKPIPGGS). A disulfide bridge links cysteine 12 with cysteine 28.

Belongs to the natriuretic peptide family. As to expression, expressed by the venom gland.

Its subcellular location is the secreted. Its function is as follows. Snake venom natriuretic peptide that targets both NPR1 and NPR2. Exhibits hypotensive and vasodepressor activities. This is Natriuretic peptide PaNP-d from Pseudechis australis (Mulga snake).